The sequence spans 284 residues: Anaerobic dimethyl sulfoxide reductase chain YnfH (284 aa).

The Periplasmic segment spans residues 1–9; sequence MGNGWHEWP. The chain crosses the membrane as a helical span at residues 10 to 30; the sequence is LVIFTVLGQCVVGALIVSGIG. Residues 31-45 lie on the Cytoplasmic side of the membrane; it reads WFAAKNDADRQRIVR. Residues 46–66 traverse the membrane as a helical segment; sequence GMFFLWLLMGVGFIASVMHLG. Topologically, residues 67–86 are periplasmic; it reads SPLRAFNSLNRIGASGLSNE. The chain crosses the membrane as a helical span at residues 87–107; that stretch reads IAAGSIFFAVGGLWWLVAVIG. Topologically, residues 108–115 are cytoplasmic; sequence KMPQALGK. A helical membrane pass occupies residues 116-136; it reads LWLLFSMALGVIFVWMMTCVY. The Periplasmic portion of the chain corresponds to 137-148; that stretch reads QIDTVPTWHNGY. Residues 149–169 traverse the membrane as a helical segment; that stretch reads TTLAFFLTVLLSGPILAAAIL. The Cytoplasmic portion of the chain corresponds to 170 to 180; sequence RAARVTFNTTP. Residues 181–201 traverse the membrane as a helical segment; it reads FAIISVLALIACAGVIVLQGL. Residues 202–222 are Periplasmic-facing; the sequence is SLASIHSSVQQASALVPDYAS. The chain crosses the membrane as a helical span at residues 223 to 243; sequence LQVWRVVLLCAGLGCWLCPLI. At 244-250 the chain is on the cytoplasmic side; that stretch reads RRREPHV. A helical transmembrane segment spans residues 251–271; it reads AGLILGLILILGGEMIGRVLF. Residues 272 to 284 lie on the Periplasmic side of the membrane; the sequence is YGLHMTVGMAIAG.

The protein belongs to the DmsC family. As to quaternary structure, the complex consists of three subunits: YnfF, the reductase; YnfG, an electron transfer protein, and YnfH, a membrane anchor protein.

The protein resides in the cell inner membrane. Its function is as follows. Terminal reductase during anaerobic growth on various sulfoxide and N-oxide compounds. The C subunit anchors the other two subunits to the membrane and stabilize the catalytic subunits. The sequence is that of Anaerobic dimethyl sulfoxide reductase chain YnfH (ynfH) from Escherichia coli (strain K12).